We begin with the raw amino-acid sequence, 31 residues long: MPTLTSYFGFLLAALTITSALFIGLSKIRLI.

The helical transmembrane segment at 4 to 26 (LTSYFGFLLAALTITSALFIGLS) threads the bilayer.

Belongs to the PetL family. In terms of assembly, the 4 large subunits of the cytochrome b6-f complex are cytochrome b6, subunit IV (17 kDa polypeptide, PetD), cytochrome f and the Rieske protein, while the 4 small subunits are PetG, PetL, PetM and PetN. The complex functions as a dimer.

Its subcellular location is the plastid. It is found in the chloroplast thylakoid membrane. Its function is as follows. Component of the cytochrome b6-f complex, which mediates electron transfer between photosystem II (PSII) and photosystem I (PSI), cyclic electron flow around PSI, and state transitions. PetL is important for photoautotrophic growth as well as for electron transfer efficiency and stability of the cytochrome b6-f complex. This Aethionema cordifolium (Lebanon stonecress) protein is Cytochrome b6-f complex subunit 6.